The chain runs to 269 residues: MTDKPGIVITGASGRMGQMLIKTVLDSDKAELAGVVEREGHDWVGQDIGIAMGGAALGVVVTDDAGSAFAGAQAVIDFTAPQATIAFSKLAAEAGCVHVIGTTGMSEAEIAQLDPAAQDTVLVRAGNMSLGVNLLVQLTKKVAAALDEDFDIEVIEAHHHHKVDAPSGTALMLGEAAAEGRGVALAEVSDRGRDGITGARKKGDIGFSAIRGGDIVGEHDVLFAAAGERIVLRHMATDRAIFARGALKAALWGQGKDAGAYDMIDVLGL.

NAD(+) contacts are provided by residues 11 to 16 (GASGRM) and Glu37. Arg38 is an NADP(+) binding site. NAD(+) is bound by residues 101–103 (GTT) and 125–128 (AGNM). His158 acts as the Proton donor/acceptor in catalysis. Position 159 (His159) interacts with (S)-2,3,4,5-tetrahydrodipicolinate. The Proton donor role is filled by Lys162. 168–169 (GT) is a (S)-2,3,4,5-tetrahydrodipicolinate binding site.

It belongs to the DapB family.

The protein resides in the cytoplasm. It catalyses the reaction (S)-2,3,4,5-tetrahydrodipicolinate + NAD(+) + H2O = (2S,4S)-4-hydroxy-2,3,4,5-tetrahydrodipicolinate + NADH + H(+). The catalysed reaction is (S)-2,3,4,5-tetrahydrodipicolinate + NADP(+) + H2O = (2S,4S)-4-hydroxy-2,3,4,5-tetrahydrodipicolinate + NADPH + H(+). The protein operates within amino-acid biosynthesis; L-lysine biosynthesis via DAP pathway; (S)-tetrahydrodipicolinate from L-aspartate: step 4/4. Catalyzes the conversion of 4-hydroxy-tetrahydrodipicolinate (HTPA) to tetrahydrodipicolinate. The sequence is that of 4-hydroxy-tetrahydrodipicolinate reductase from Ruegeria sp. (strain TM1040) (Silicibacter sp.).